The chain runs to 128 residues: Aspartate 1-decarboxylase (128 aa).

S25 (schiff-base intermediate with substrate; via pyruvic acid) is an active-site residue. Position 25 is a pyruvic acid (Ser) (S25). T57 is a binding site for substrate. Catalysis depends on Y58, which acts as the Proton donor. G73–A75 is a substrate binding site.

The protein belongs to the PanD family. In terms of assembly, heterooctamer of four alpha and four beta subunits. Pyruvate is required as a cofactor. In terms of processing, is synthesized initially as an inactive proenzyme, which is activated by self-cleavage at a specific serine bond to produce a beta-subunit with a hydroxyl group at its C-terminus and an alpha-subunit with a pyruvoyl group at its N-terminus.

It localises to the cytoplasm. The enzyme catalyses L-aspartate + H(+) = beta-alanine + CO2. It participates in cofactor biosynthesis; (R)-pantothenate biosynthesis; beta-alanine from L-aspartate: step 1/1. Functionally, catalyzes the pyruvoyl-dependent decarboxylation of aspartate to produce beta-alanine. The protein is Aspartate 1-decarboxylase of Paraburkholderia phymatum (strain DSM 17167 / CIP 108236 / LMG 21445 / STM815) (Burkholderia phymatum).